A 737-amino-acid chain; its full sequence is Prospero homeobox protein 1 (737 aa).

The interval 1–28 (MPDHDSTALLSRQTKRRRVDIGVKRTVG) is interaction with RORG. Positions 103-135 (KNGGTEPSFQASGLSSTGSEVHQEDICSNSSRD) are enriched in polar residues. A disordered region spans residues 103–149 (KNGGTEPSFQASGLSSTGSEVHQEDICSNSSRDSPPECLSPFGRPTM). Phosphoserine occurs at positions 177, 179, and 199. The interval 178–242 (HSPSVALRGN…REERRQLKQQ (65 aa)) is disordered. The span at 213-223 (LPQQQQQSFQQ) shows a compositional bias: low complexity. The segment covering 227–242 (ARKEQKREERRQLKQQ) has biased composition (basic and acidic residues). Phosphoserine is present on residues S291 and S295. Positions 320–337 (MAENKPKREGNNKERDHG) are enriched in basic and acidic residues. 2 disordered regions span residues 320-344 (MAEN…LQPE) and 445-476 (KNSS…TGFT). K324 is covalently cross-linked (Glycyl lysine isopeptide (Lys-Gly) (interchain with G-Cter in SUMO2)). Over residues 464–476 (LHQSPLSATTGFT) the composition is skewed to polar residues. Phosphoserine occurs at positions 511, 514, and 557. The Prospero-type homeo domain occupies 577-635 (QEGLSPNHLKKAKLMFFYTRYPSSNMLKTYFSDVKFNRCITSQLIKWFSNFREFYYIQM). The interval 577–735 (QEGLSPNHLK…KSPNCLQELL (159 aa)) is homeo-Prospero. A Prospero domain is found at 636-735 (EKYARQAIND…KSPNCLQELL (100 aa)). Residues 723-729 (EIFKSPN) form an essential for nuclear localization, interaction with RORG, repression of RORG transcriptional activator activity region.

Belongs to the Prospero homeodomain family. In terms of assembly, interacts with RORA and RORG (via AF-2 motif). Most actively expressed in the developing lens. Detected also in embryonic brain, lung, liver and kidney. In adult, it is more abundant in heart and liver than in brain, skeletal muscle, kidney and pancreas.

Its subcellular location is the nucleus. Its function is as follows. Transcription factor involved in developmental processes such as cell fate determination, gene transcriptional regulation and progenitor cell regulation in a number of organs. Plays a critical role in embryonic development and functions as a key regulatory protein in neurogenesis and the development of the heart, eye lens, liver, pancreas and the lymphatic system. Involved in the regulation of the circadian rhythm. Represses: transcription of the retinoid-related orphan receptor RORG, transcriptional activator activity of RORA and RORG and the expression of RORA/G-target genes including core clock components: BMAL1, NPAS2 and CRY1 and metabolic genes: AVPR1A and ELOVL3. The sequence is that of Prospero homeobox protein 1 (PROX1) from Homo sapiens (Human).